The sequence spans 1756 residues: Transposon Ty1-BR Gag-Pol polyprotein (1756 aa).

Polar residues-rich tracts occupy residues 1–10 (MESQQLSNYP), 48–60 (TKANSQQTTTPAS), and 127–152 (QSQFPQYPSSVGTPLSTPSPESGNTF). Disordered stretches follow at residues 1-93 (MESQ…MMTQ), 126-173 (PQSQ…RPPP), and 352-421 (GSRN…SKST). A compositionally biased stretch (low complexity) spans 153 to 165 (TDSSSADSDMTST). The segment at 299–401 (NNGIHINNKV…NSKSKTARAH (103 aa)) is RNA-binding. The span at 402 to 418 (NVSTSNNSPSTDNDSIS) shows a compositional bias: low complexity. Position 416 is a phosphoserine (serine 416). Aspartate 461 (for protease activity; shared with dimeric partner) is an active-site residue. The tract at residues 583-640 (NVHTSESTRKYPYPFIHRMLAHANAQTIRYSLKNNTITYFNESDVDWSSAIDYQCPDC) is integrase-type zinc finger-like. Residues 660-835 (NSYEPFQYLH…AGLDISTLLP (176 aa)) form the Integrase catalytic domain. Aspartate 671 and aspartate 736 together coordinate Mg(2+). Disordered regions lie at residues 956-1088 (SKAV…TEKR) and 1142-1173 (PTELSDSFKELPPINSRQTNSSLGGIGDSNAY). Residues 960–969 (SPTDSTPPST) are compositionally biased toward low complexity. Polar residues-rich tracts occupy residues 1005 to 1017 (STPQISDIESTDS) and 1031 to 1043 (MSQSNTHESSYAS). Residues 1044–1053 (KSKDFRHSDS) show a composition bias toward basic and acidic residues. Residues 1054–1082 (YSDNETNHTNVPISSTGGTNNKTVPQTSE) show a composition bias toward polar residues. The Bipartite nuclear localization signal signature appears at 1179–1213 (KKRSLEDNETEIKVSRDTWNTKNMRSLEPPRSKKR). Positions 1339–1477 (NNYYITQLDI…DILGLEIKYQ (139 aa)) constitute a Reverse transcriptase Ty1/copia-type domain. 6 residues coordinate Mg(2+): aspartate 1347, aspartate 1428, aspartate 1429, aspartate 1611, glutamate 1653, and aspartate 1686. An RNase H Ty1/copia-type domain is found at 1611-1753 (DASYGNQPYY…IKTFKLLTNK (143 aa)).

In terms of assembly, the capsid protein forms a homotrimer, from which the VLPs are assembled. The protease is a homodimer, whose active site consists of two apposed aspartic acid residues. In terms of processing, initially, virus-like particles (VLPs) are composed of the structural unprocessed proteins Gag and Gag-Pol, and also contain the host initiator methionine tRNA (tRNA(i)-Met) which serves as a primer for minus-strand DNA synthesis, and a dimer of genomic Ty RNA. Processing of the polyproteins occurs within the particle and proceeds by an ordered pathway, called maturation. First, the protease (PR) is released by autocatalytic cleavage of the Gag-Pol polyprotein yielding capsid protein p45 and a Pol-p154 precursor protein. This cleavage is a prerequisite for subsequent processing of Pol-p154 at the remaining sites to release the mature structural and catalytic proteins. Maturation takes place prior to the RT reaction and is required to produce transposition-competent VLPs.

The protein resides in the cytoplasm. It is found in the nucleus. The enzyme catalyses DNA(n) + a 2'-deoxyribonucleoside 5'-triphosphate = DNA(n+1) + diphosphate. It catalyses the reaction Endonucleolytic cleavage to 5'-phosphomonoester.. Its function is as follows. Capsid protein (CA) is the structural component of the virus-like particle (VLP), forming the shell that encapsulates the retrotransposons dimeric RNA genome. The particles are assembled from trimer-clustered units and there are holes in the capsid shells that allow for the diffusion of macromolecules. CA also has nucleocapsid-like chaperone activity, promoting primer tRNA(i)-Met annealing to the multipartite primer-binding site (PBS), dimerization of Ty1 RNA and initiation of reverse transcription. In terms of biological role, the aspartyl protease (PR) mediates the proteolytic cleavages of the Gag and Gag-Pol polyproteins after assembly of the VLP. Reverse transcriptase/ribonuclease H (RT) is a multifunctional enzyme that catalyzes the conversion of the retro-elements RNA genome into dsDNA within the VLP. The enzyme displays a DNA polymerase activity that can copy either DNA or RNA templates, and a ribonuclease H (RNase H) activity that cleaves the RNA strand of RNA-DNA heteroduplexes during plus-strand synthesis and hydrolyzes RNA primers. The conversion leads to a linear dsDNA copy of the retrotransposon that includes long terminal repeats (LTRs) at both ends. Functionally, integrase (IN) targets the VLP to the nucleus, where a subparticle preintegration complex (PIC) containing at least integrase and the newly synthesized dsDNA copy of the retrotransposon must transit the nuclear membrane. Once in the nucleus, integrase performs the integration of the dsDNA into the host genome. The sequence is that of Transposon Ty1-BR Gag-Pol polyprotein (TY1B-BR) from Saccharomyces cerevisiae (strain ATCC 204508 / S288c) (Baker's yeast).